We begin with the raw amino-acid sequence, 494 residues long: UDP-N-acetylmuramoyl-L-alanyl-D-glutamate--L-lysine ligase (494 aa).

Ser-30 is a UDP-N-acetyl-alpha-D-muramoyl-L-alanyl-D-glutamate binding site. An ATP-binding site is contributed by 110-116 (GTNGKTS). UDP-N-acetyl-alpha-D-muramoyl-L-alanyl-D-glutamate-binding positions include 152 to 153 (TT), Ser-179, and Arg-187. At Lys-219 the chain carries N6-carboxylysine. Residues 406-409 (DNPA) carry the L-lysine recognition motif motif.

It belongs to the MurCDEF family. MurE subfamily. Carboxylation is probably crucial for Mg(2+) binding and, consequently, for the gamma-phosphate positioning of ATP.

The protein localises to the cytoplasm. The catalysed reaction is UDP-N-acetyl-alpha-D-muramoyl-L-alanyl-D-glutamate + L-lysine + ATP = UDP-N-acetyl-alpha-D-muramoyl-L-alanyl-gamma-D-glutamyl-L-lysine + ADP + phosphate + H(+). It participates in cell wall biogenesis; peptidoglycan biosynthesis. Functionally, catalyzes the addition of L-lysine to the nucleotide precursor UDP-N-acetylmuramoyl-L-alanyl-D-glutamate (UMAG) in the biosynthesis of bacterial cell-wall peptidoglycan. The sequence is that of UDP-N-acetylmuramoyl-L-alanyl-D-glutamate--L-lysine ligase from Staphylococcus aureus (strain bovine RF122 / ET3-1).